A 242-amino-acid polypeptide reads, in one-letter code: B-box zinc finger protein 20 (242 aa).

Residues Cys-5, Cys-8, Cys-28, His-33, Cys-58, Cys-61, Cys-81, and His-91 each contribute to the Zn(2+) site. The B box-type 1; atypical zinc-finger motif lies at 5–47; sequence CAVCDKEEASVFCCADEAALCNGCDRHVHFANKLAGKHLRFSL. The segment at 58 to 100 adopts a B box-type 2; atypical zinc-finger fold; the sequence is CDICGERRALLFCQEDRAILCRECDIPIHQANEHTKKHNRFLL. Positions 112-153 are disordered; the sequence is YPRASNSNSAAAFGRAKTRPKSVSSEVPSSASNEVFTSSSST. Over residues 133 to 153 the composition is skewed to low complexity; sequence SVSSEVPSSASNEVFTSSSST.

As to quaternary structure, interacts with MED25 and COP1. COP1-mediated ubiquitination and subsequent proteasomal degradation of BBX20 occurs in the dark.

It localises to the nucleus. Functionally, acts as a positive regulator of seedling photomorphogenesis. Plays a negative role in brassinosteroid responses. The sequence is that of B-box zinc finger protein 20 from Arabidopsis thaliana (Mouse-ear cress).